The primary structure comprises 199 residues: MPIGVPKVPFRLPGEEDAVWIDVYNNRLYRERLLFLGQHVDDEIANQLIGIMMYLNGEDENKDMYLYINSPGGAVLAGISVYDAMQFVVPDVHTICMGLAASMGSFILAGGEITKRIALPHARVMIHQPASSYYDGQAGECIMEAEEVLKLRDYITRVYVQRIGKPLWVISEDMERDVFMSAQEAKTYGIVDLVAIENT.

The active-site Nucleophile is S102. H127 is an active-site residue.

It belongs to the peptidase S14 family. In terms of assembly, component of the chloroplastic Clp protease core complex.

Its subcellular location is the plastid. The protein localises to the chloroplast stroma. The enzyme catalyses Hydrolysis of proteins to small peptides in the presence of ATP and magnesium. alpha-casein is the usual test substrate. In the absence of ATP, only oligopeptides shorter than five residues are hydrolyzed (such as succinyl-Leu-Tyr-|-NHMec, and Leu-Tyr-Leu-|-Tyr-Trp, in which cleavage of the -Tyr-|-Leu- and -Tyr-|-Trp bonds also occurs).. Cleaves peptides in various proteins in a process that requires ATP hydrolysis. Has a chymotrypsin-like activity. Plays a major role in the degradation of misfolded proteins. This is ATP-dependent Clp protease proteolytic subunit from Physcomitrium patens (Spreading-leaved earth moss).